The following is a 61-amino-acid chain: Small ribosomal subunit protein uS14B (61 aa).

Zn(2+) contacts are provided by Cys-24, Cys-27, Cys-40, and Cys-43.

This sequence belongs to the universal ribosomal protein uS14 family. Zinc-binding uS14 subfamily. As to quaternary structure, part of the 30S ribosomal subunit. Contacts proteins S3 and S10. Requires Zn(2+) as cofactor.

Binds 16S rRNA, required for the assembly of 30S particles and may also be responsible for determining the conformation of the 16S rRNA at the A site. The sequence is that of Small ribosomal subunit protein uS14B from Myxococcus xanthus (strain DK1622).